Here is a 232-residue protein sequence, read N- to C-terminus: Ribonuclease 3 (232 aa).

Positions 5–134 (QTVLKNHFAI…FLGALLLDKD (130 aa)) constitute an RNase III domain. Residue glutamate 47 coordinates Mg(2+). Residue aspartate 51 is part of the active site. Aspartate 120 and glutamate 123 together coordinate Mg(2+). Glutamate 123 is a catalytic residue. The DRBM domain occupies 160–229 (DYKTHLQELL…AKNAVEKGLD (70 aa)).

This sequence belongs to the ribonuclease III family. As to quaternary structure, homodimer. The cofactor is Mg(2+).

It is found in the cytoplasm. The enzyme catalyses Endonucleolytic cleavage to 5'-phosphomonoester.. In terms of biological role, digests double-stranded RNA. Involved in the processing of primary rRNA transcript to yield the immediate precursors to the large and small rRNAs (23S and 16S). Processes some mRNAs, and tRNAs when they are encoded in the rRNA operon. Processes pre-crRNA and tracrRNA of type II CRISPR loci if present in the organism. The protein is Ribonuclease 3 of Streptococcus pneumoniae serotype 4 (strain ATCC BAA-334 / TIGR4).